Here is a 190-residue protein sequence, read N- to C-terminus: Probable E3 ubiquitin-protein ligase RHB1A (190 aa).

An RING-type; atypical zinc finger spans residues 139–180; sequence CPICFEDYDVENPRLTTKCEHEFHLSCLLEWIERSDRCPICD.

The catalysed reaction is S-ubiquitinyl-[E2 ubiquitin-conjugating enzyme]-L-cysteine + [acceptor protein]-L-lysine = [E2 ubiquitin-conjugating enzyme]-L-cysteine + N(6)-ubiquitinyl-[acceptor protein]-L-lysine.. The protein operates within protein modification; protein ubiquitination. Functionally, probable E3 ubiquitin-protein ligase that may possess E3 ubiquitin ligase activity in vitro. The chain is Probable E3 ubiquitin-protein ligase RHB1A from Arabidopsis thaliana (Mouse-ear cress).